Consider the following 86-residue polypeptide: Cell division topological specificity factor (86 aa).

The protein belongs to the MinE family.

Its function is as follows. Prevents the cell division inhibition by proteins MinC and MinD at internal division sites while permitting inhibition at polar sites. This ensures cell division at the proper site by restricting the formation of a division septum at the midpoint of the long axis of the cell. This is Cell division topological specificity factor from Bordetella petrii (strain ATCC BAA-461 / DSM 12804 / CCUG 43448).